The primary structure comprises 742 residues: MSDEDSMLLNFTTNEDTAGSSYKQAAKVTGGRWKDRRRMKMKLEGKTVSRKRKANTTGDEGIIPGRGENSIKKLHKESSYSSEEQEKYKGRNAHNTQGRTLPADSQFVSSLFTSNREITTAVNTNIHDENVAINPSNAPLKGDQFASLGVSSLLVSHLEQKMRIKKPTSIQKQAIPQIIGNAGKNDFFIHAQTGSGKTLSYLLPIISTILNMDTHVDRTSGAFALVIAPTRELASQIYHVCSTLVSCCHYLVPCLLIGGERKKSEKARLRKGCNFIIGTPGRVLDHLQNTKVIKEQLSQSLRYIVLDEGDKLMELGFDETISEIIKIVHDIPINSEKFPKLPHKLVHMLCSATLTDGVNRLRNVALKDYKLISNGTKKDSDIVTVAPDQLLQRITIVPPKLRLVTLAATLNNITKDFIASGQQSKTLRTIVFVSCSDSVEFHYDAFSGSDGHHKNLTGDSVRLLTKGNTMFPCFSDSRDPDVVIYKLHGSLSQQMRTSTLQHFARDNEATKGKHLIMFCTDVASRGLDLPHVGSVIELDPPFAVEDHLHRVGRTARAGEKGESLLFLLPGEEEKYMDYIQPYHPMGWELLKFDKEILMPAFKDVNVNRNDKFIRKDEKSSKNKDVGDKEYEWDTNATTWHLNIERRVVGDSAFKNLAVKGFISHVRAYATHISQEKKFFNVKFLHLGHLAKSFGLRERPKAMGLQSSKDGNSEKKPTKENSKNKMFRMARMAEKQIASEFNY.

Residues 45 to 100 (GKTVSRKRKANTTGDEGIIPGRGENSIKKLHKESSYSSEEQEKYKGRNAHNTQGRT) are disordered. Positions 143-172 (DQFASLGVSSLLVSHLEQKMRIKKPTSIQK) match the Q motif motif. Residues 178 to 372 (IIGNAGKNDF…NVALKDYKLI (195 aa)) enclose the Helicase ATP-binding domain. Residue 191-198 (AQTGSGKT) participates in ATP binding. The short motif at 307–310 (DEGD) is the DEGD box element. The region spanning 405–605 (TLAATLNNIT…ILMPAFKDVN (201 aa)) is the Helicase C-terminal domain. Residues 701 to 726 (AMGLQSSKDGNSEKKPTKENSKNKMF) form a disordered region. A compositionally biased stretch (basic and acidic residues) spans 710–722 (GNSEKKPTKENSK).

It belongs to the DEAD box helicase family. DDX31/DBP7 subfamily.

The protein localises to the nucleus. It localises to the nucleolus. It catalyses the reaction ATP + H2O = ADP + phosphate + H(+). Its function is as follows. ATP-binding RNA helicase involved in the biogenesis of 60S ribosomal subunits and is required for the normal formation of 25S and 5.8S rRNAs. The sequence is that of ATP-dependent RNA helicase DBP7 (DBP7) from Saccharomyces cerevisiae (strain ATCC 204508 / S288c) (Baker's yeast).